The following is a 739-amino-acid chain: Adenosylcobalamin-dependent ribonucleoside-triphosphate reductase (739 aa).

Cys-119 and Cys-419 are oxidised to a cystine. Residues 147–158 form an effector region-1 region; the sequence is SMPFSFLFDELM. Residues 168–313 are effector region-2; the sequence is ARSNISQIPR…ICNLIGKAVV (146 aa). Active-site residues include Cys-408 and Glu-410. The tract at residues 565–626 is adenosylcobalamin-binding-1; that stretch reads FHYGAYLIQR…NPNFASAGTV (62 aa). Residues 685-724 form an adenosylcobalamin-binding-2 region; the sequence is LQQAPKEPIDKETYEKRSQEITGNVEEVFSQLNSDVKDLE.

This sequence belongs to the class II ribonucleoside-triphosphate reductase family. Monomer. Adenosylcob(III)alamin is required as a cofactor.

It carries out the reaction a 2'-deoxyribonucleoside 5'-triphosphate + [thioredoxin]-disulfide + H2O = a ribonucleoside 5'-triphosphate + [thioredoxin]-dithiol. With respect to regulation, allosterically regulated by ATP and dNTP. This Lactobacillus leichmannii protein is Adenosylcobalamin-dependent ribonucleoside-triphosphate reductase (rtpR).